We begin with the raw amino-acid sequence, 614 residues long: Acetylcholinesterase (614 aa).

The first 31 residues, 1–31 (MRPPQCLLHTPSLASPLLLLLLWLLGGGVGA), serve as a signal peptide directing secretion. An intrachain disulfide couples C100 to C127. Residue W117 coordinates galanthamine. W117 contacts huperzine A. G153 contributes to the huprine W binding site. Residue Y164 coordinates huperzine A. Galanthamine is bound at residue 233–234 (ES). Position 234 (S234) interacts with huprine W. S234 acts as the Acyl-ester intermediate in catalysis. The cysteines at positions 288 and 303 are disulfide-linked. N296 carries an N-linked (GlcNAc...) asparagine glycan. Catalysis depends on E365, which acts as the Charge relay system. Y368 contributes to the galanthamine binding site. Y368 lines the huperzine A pocket. N-linked (GlcNAc...) asparagine glycosylation occurs at N381. C440 and C560 are disulfide-bonded. Huprine W is bound by residues W470 and H478. The active-site Charge relay system is the H478. N495 carries an N-linked (GlcNAc...) asparagine glycan. Residue F588 is the site of GPI-anchor amidated glycine attachment.

Belongs to the type-B carboxylesterase/lipase family. Interacts with PRIMA1. The interaction with PRIMA1 is required to anchor it to the basal lamina of cells and organize into tetramers. Isoform H generates GPI-anchored dimers; disulfide linked. Isoform T generates multiple structures, ranging from monomers and dimers to collagen-tailed and hydrophobic-tailed forms, in which catalytic tetramers are associated with anchoring proteins that attach them to the basal lamina or to cell membranes. In the collagen-tailed forms, isoform T subunits are associated with a specific collagen, COLQ, which triggers the formation of isoform T tetramers, from monomers and dimers. Isoform R may be monomeric. As to expression, isoform H is highly expressed in erythrocytes.

The protein resides in the synapse. Its subcellular location is the secreted. It localises to the cell membrane. The protein localises to the nucleus. The catalysed reaction is acetylcholine + H2O = choline + acetate + H(+). Its function is as follows. Hydrolyzes rapidly the acetylcholine neurotransmitter released into the synaptic cleft allowing to terminate the signal transduction at the neuromuscular junction. Role in neuronal apoptosis. This chain is Acetylcholinesterase, found in Homo sapiens (Human).